Reading from the N-terminus, the 270-residue chain is Chymotrypsin-like elastase family member 3A (270 aa).

The segment at residues 1 to 15 (MMLRLLSSLLLVAVA) is a signal peptide (or 16). The propeptide at 16–28 (SGYGPPSSHSSSR) is activation peptide. Positions 29-268 (VVHGEDAVPY…FIDWIEETIA (240 aa)) constitute a Peptidase S1 domain. The cysteines at positions 58 and 74 are disulfide-linked. Histidine 73 functions as the Charge relay system in the catalytic mechanism. An N-linked (GlcNAc...) asparagine glycan is attached at asparagine 114. Cysteine 117 and cysteine 120 are oxidised to a cystine. The Charge relay system role is filled by aspartate 123. Disulfide bonds link cysteine 157/cysteine 223, cysteine 188/cysteine 204, and cysteine 213/cysteine 244. Catalysis depends on serine 217, which acts as the Charge relay system.

Belongs to the peptidase S1 family. Elastase subfamily.

It catalyses the reaction Preferential cleavage: Ala-|-Xaa. Does not hydrolyze elastin.. In terms of biological role, efficient protease with alanine specificity but only little elastolytic activity. In Homo sapiens (Human), this protein is Chymotrypsin-like elastase family member 3A (CELA3A).